The following is a 348-amino-acid chain: 3-isopropylmalate dehydrogenase (348 aa).

An NAD(+)-binding site is contributed by 76-87 (GPKWTDPNNRPE). Residues R94, R104, R132, and D217 each coordinate substrate. Residues D217, D241, and D245 each contribute to the Mg(2+) site. 275–287 (GSAPDIAGKNVAN) provides a ligand contact to NAD(+).

It belongs to the isocitrate and isopropylmalate dehydrogenases family. LeuB type 1 subfamily. In terms of assembly, homodimer. The cofactor is Mg(2+). Mn(2+) is required as a cofactor.

It is found in the cytoplasm. It carries out the reaction (2R,3S)-3-isopropylmalate + NAD(+) = 4-methyl-2-oxopentanoate + CO2 + NADH. It functions in the pathway amino-acid biosynthesis; L-leucine biosynthesis; L-leucine from 3-methyl-2-oxobutanoate: step 3/4. Catalyzes the oxidation of 3-carboxy-2-hydroxy-4-methylpentanoate (3-isopropylmalate) to 3-carboxy-4-methyl-2-oxopentanoate. The product decarboxylates to 4-methyl-2 oxopentanoate. The polypeptide is 3-isopropylmalate dehydrogenase (Staphylococcus aureus (strain MRSA252)).